Reading from the N-terminus, the 388-residue chain is Single-stranded DNA-binding protein 3 (388 aa).

M1 is modified (N-acetylmethionine). In terms of domain architecture, LisH spans 16–48 (AREKLALYVYEYLLHVGAQKSAQTFLSEIRWEK). Residues 101 to 388 (VLGNIPPNDG…NYSPSMTMSV (288 aa)) are disordered. Residues 126-139 (GSQPSPHAQPPPHN) show a composition bias toward pro residues. Asymmetric dimethylarginine occurs at positions 155, 161, and 165. 2 stretches are compositionally biased toward low complexity: residues 200–209 (MQRMNPPRGM) and 250–268 (PNSANSIPYSSSSPGTYVG). Positions 272–282 (GGGPPGTPIMP) are enriched in pro residues. Residues 285–296 (ADSTNSSDNIYT) show a composition bias toward polar residues. Residues 315-325 (GSDGPMGGMGG) show a composition bias toward gly residues. Residues 346–357 (NSPNNISGISNP) show a composition bias toward low complexity. S347, S352, and S355 each carry phosphoserine. T360 carries the post-translational modification Phosphothreonine. Residues 373–388 (HSFQNDNYSPSMTMSV) are compositionally biased toward polar residues. Phosphoserine occurs at positions 381 and 387.

Highly expressed in all hematopoietic tissues, including spleen, lymph node, peripheral blood, bone marrow, thymus, and fetal liver, with highest expression in thymus and fetal liver. Expression is also high in heart, brain, kidney, and skeletal muscle.

The protein localises to the nucleus. May be involved in transcription regulation of the alpha 2(I) collagen gene where it binds to the single-stranded polypyrimidine sequences in the promoter region. This chain is Single-stranded DNA-binding protein 3 (SSBP3), found in Homo sapiens (Human).